The sequence spans 201 residues: MSGSSEQELKMMVRSLNLESGFLGTFDCRFPGFISKDRRQTAIVNTGPREQGGVHWIALAWDPTSRKMFLFDPLGWTNAELKKYYGFSYQNMVQRSALSSADRCVTLERNTQAVQCTCAGSCGLFCILFLYCAHLSPSNPFGTSLFQSLDGQKSGMVPRSPEALHKNQQILYNFLSSKCAYFRKNARNIVMNTRLHLIKTH.

Residues His55, Asp72, and Cys122 contribute to the active site.

The protein belongs to the peptidase C5 family. In terms of assembly, interacts with protease cofactor pVI-C; this interaction is necessary for protease activation.

It is found in the virion. It localises to the host nucleus. It carries out the reaction Cleaves proteins of the adenovirus and its host cell at two consensus sites: -Yaa-Xaa-Gly-Gly-|-Xaa- and -Yaa-Xaa-Gly-Xaa-|-Gly- (in which Yaa is Met, Ile or Leu, and Xaa is any amino acid).. With respect to regulation, requires DNA and protease cofactor for maximal activation. Inside nascent virions, becomes partially activated by binding to the viral DNA, allowing it to cleave the cofactor that binds to the protease and fully activates it. Actin, like the viral protease cofactor, seems to act as a cofactor in the cleavage of cytokeratin 18 and of actin itself. Cleaves viral precursor proteins (pTP, pIIIa, pVI, pVII, pVIII, and pX) inside newly assembled particles giving rise to mature virions. Protease complexed to its cofactor slides along the viral DNA to specifically locate and cleave the viral precursors. Mature virions have a weakened organization compared to the unmature virions, thereby facilitating subsequent uncoating. Without maturation, the particle lacks infectivity and is unable to uncoat. Late in adenovirus infection, in the cytoplasm, may participate in the cytoskeleton destruction. Cleaves host cell cytoskeletal keratins K7 and K18. This chain is Protease, found in Pantherophis guttatus (Corn snake).